We begin with the raw amino-acid sequence, 412 residues long: Cinnamoyl-CoA:phenyllactate CoA-transferase (412 aa).

A CoA-binding site is contributed by N102. The active-site Nucleophile is the D176.

In terms of assembly, homodimer. Part of the heterotrimeric phenyllactate dehydratase complex FldABC, composed of (R)-phenyllactate CoA-transferase (FldA) and a heterodimeric (R)-phenyllactyl-CoA dehydratase (FldB and FldC).

It carries out the reaction (E)-cinnamoyl-CoA + (R)-3-phenyllactate = (R)-3-phenyllactoyl-CoA + (E)-cinnamate. It participates in amino-acid degradation; L-phenylalanine degradation. Functionally, component of the phenyllactate dehydratase complex FldABC that is involved in the fermentation of L-phenylalanine via a Stickland reaction. This complex catalyzes the reversible syn-dehydration of (R)-phenyllactate to (E)-cinnamate in two steps, a CoA-transfer from cinnamoyl-CoA to phenyllactate, catalyzed by FldA, followed by the dehydration of phenyllactyl-CoA to cinnamoyl-CoA, catalyzed by FldB and FldC. In vitro, FldA can use 3-phenylpropanoate as a better CoA-acceptor than phenyllactate. This chain is Cinnamoyl-CoA:phenyllactate CoA-transferase, found in Clostridium sporogenes.